Here is an 89-residue protein sequence, read N- to C-terminus: Large ribosomal subunit protein uL24 (89 aa).

The protein belongs to the universal ribosomal protein uL24 family. In terms of assembly, part of the 50S ribosomal subunit.

Its function is as follows. One of two assembly initiator proteins, it binds directly to the 5'-end of the 23S rRNA, where it nucleates assembly of the 50S subunit. In terms of biological role, one of the proteins that surrounds the polypeptide exit tunnel on the outside of the subunit. This is Large ribosomal subunit protein uL24 from Chlorobium chlorochromatii (strain CaD3).